Reading from the N-terminus, the 475-residue chain is Putative aldehyde dehydrogenase (475 aa).

NAD(+) is bound by residues 146–147 (WN) and 223–224 (GS). Residue glutamate 245 is the Proton acceptor of the active site. Leucine 246 serves as a coordination point for NAD(+). The active-site Nucleophile is cysteine 279. Glutamate 379 provides a ligand contact to NAD(+).

The protein belongs to the aldehyde dehydrogenase family.

It carries out the reaction an aldehyde + NAD(+) + H2O = a carboxylate + NADH + 2 H(+). This Staphylococcus aureus (strain USA300) protein is Putative aldehyde dehydrogenase.